Here is a 600-residue protein sequence, read N- to C-terminus: Long-chain-fatty-acid--CoA ligase FadD15 (600 aa).

This sequence belongs to the ATP-dependent AMP-binding enzyme family.

The catalysed reaction is a long-chain fatty acid + ATP + CoA = a long-chain fatty acyl-CoA + AMP + diphosphate. Its pathway is lipid metabolism; fatty acid biosynthesis. In terms of biological role, catalyzes the activation of long-chain fatty acids as acyl-coenzyme A (acyl-CoA), which are then transferred to the multifunctional polyketide synthase (PKS) type III for further chain extension. The chain is Long-chain-fatty-acid--CoA ligase FadD15 (fadD15) from Mycobacterium bovis (strain ATCC BAA-935 / AF2122/97).